Reading from the N-terminus, the 554-residue chain is Intraflagellar transport protein 56 (554 aa).

The interval 1-23 (MMLSRAKPAVGNEVQQIDKKKKK) is disordered. TPR repeat units follow at residues 57–90 (EDTE…EGCN), 92–125 (DVWV…LQNR), 151–184 (IEDQ…NRDF), and 468–501 (ANDC…EGKR).

It belongs to the IFT56 family. Component of the IFT complex B.

It localises to the cell projection. Its subcellular location is the cilium. Functionally, component of the intraflagellar transport (IFT) complex B required for transport of proteins in the motile cilium. Required for transport of specific ciliary cargo proteins related to motility, while it is neither required for IFT complex B assembly or motion nor for cilium assembly. Plays a key role in maintaining the integrity of the IFT complex B and the proper ciliary localization of the IFT complex B components. Essential for maintaining proper microtubule organization within the ciliary axoneme. The chain is Intraflagellar transport protein 56 from Xenopus tropicalis (Western clawed frog).